The following is a 575-amino-acid chain: MMSWKFGKKFKEGGFLSGKHHSSNNNSPSDTSRSTTPTPGNPHPEDAVKPPVPRSGMLKIRVTAAKGLSLPQGVSVPAPVQEALTTHPTLASRIATSPPTAIVKAAGANRDSLQRRQVWWLPYLVLEFDKNEVLVDALGGDLASPVWMYSATFDVSRISEISATVYLRTREPHAEGREKSNGEGEGEDMGNSDLCLGSIRFTPNLDSLRVTDDWVTVQGGGGSGSINVQVSFKPASGQILTIDSFELLKVIGKGSFGKVMQVRKRDTLRIYALKTIRKAHIVSRSEVTHTLAERTVLAQVNCPFIVPLKFSFQSKEKLYLVLAFINGGELFHHLQREGKFNETRSRFYSAQLLLALEHLHSFNVIYRDLKPENILLDYAGNIALCDFGLCKLNMSNSDTTNTFCGTPEYLAPELLSGHGYTKCVDWWTLGVLLYEMLTGLPPFYDENTNEMYRKILTEPLRFPDGVRSEARSLLTGLLNRDPRQRLGVNGAQDIKNHPFFAKHINFTKLWNKQIQPPFKPAVASAIDTSNFDEEFTNEVPLDSVVDDSHLSQTVQQQFEGFSWSVSPLGESVGRY.

The segment at 1 to 53 (MMSWKFGKKFKEGGFLSGKHHSSNNNSPSDTSRSTTPTPGNPHPEDAVKPPVP) is disordered. A compositionally biased stretch (low complexity) spans 23–38 (SNNNSPSDTSRSTTPT). The Protein kinase domain occupies 245-500 (FELLKVIGKG…AQDIKNHPFF (256 aa)). ATP is bound by residues 251-259 (IGKGSFGKV) and K274. Residue D368 is the Proton acceptor of the active site. The AGC-kinase C-terminal domain maps to 502 to 573 (KHINFTKLWN…SVSPLGESVG (72 aa)). S543 and S562 each carry phosphoserine.

The protein belongs to the protein kinase superfamily. AGC Ser/Thr protein kinase family. RAC subfamily.

It carries out the reaction L-seryl-[protein] + ATP = O-phospho-L-seryl-[protein] + ADP + H(+). The catalysed reaction is L-threonyl-[protein] + ATP = O-phospho-L-threonyl-[protein] + ADP + H(+). In terms of biological role, probable serine/threonine-protein kinase which may act in the sphingolipid-mediated signaling pathway. May act downstream of TORC2 (TOR complex 2) and PDK1 to regulate sphingolipid metabolism. This Cryptococcus neoformans var. grubii serotype A (strain H99 / ATCC 208821 / CBS 10515 / FGSC 9487) (Filobasidiella neoformans var. grubii) protein is Serine/threonine-protein kinase YPK1.